The chain runs to 978 residues: Sensor histidine kinase TodS (978 aa).

The PAS 1 domain occupies 32-103 (CEEHARIIFD…TQKRLVETAS (72 aa)). One can recognise a PAC 1 domain in the interval 108 to 162 (VRCDVEILGKSGGREVIAVDFSLLPICNEEGSIVYLLAEGRNITDKKKAEAMLAL). In terms of domain architecture, Histidine kinase 1 spans 187–405 (KVSHELRTPL…LFQVKLPLNA (219 aa)). His190 is subject to Phosphohistidine; by autocatalysis. Positions 452–567 (RVLIVEDNPD…ELRARVSNLV (116 aa)) constitute a Response regulatory domain. Asp500 is modified (4-aspartylphosphate). One can recognise a PAS 2 domain in the interval 611 to 681 (SEARWKAVYE…QRLANLLQGG (71 aa)). The PAC 2 domain occupies 685–737 (YSVERSYLCKNGSTIWANASVSLMPQRVGESPVILQIIDDITEKKQAQENLNQ). In terms of domain architecture, Histidine kinase 2 spans 757-974 (YIAHEINQPL…CFLVSIPARQ (218 aa)). Residue His760 is modified to Phosphohistidine.

Homodimer. Binds as a dimer to a pseudopalindromic sequence. In terms of processing, autophosphorylated. Activation requires a sequential transfer of a phosphate group from a His in the primary transmitter domain, to an Asp in the receiver domain and to a His in the secondary transmitter domain.

It is found in the cytoplasm. The catalysed reaction is ATP + protein L-histidine = ADP + protein N-phospho-L-histidine.. Its function is as follows. Member of the two-component regulatory system TodS/TodT involved in the regulation of toluene degradation. Phosphorylates TodT via a four-step phosphorelay in response to toluene. This Pseudomonas putida (strain ATCC 700007 / DSM 6899 / JCM 31910 / BCRC 17059 / LMG 24140 / F1) protein is Sensor histidine kinase TodS (todS).